Reading from the N-terminus, the 192-residue chain is Cytidylate kinase (192 aa).

7–15 (GPAGSGKST) lines the ATP pocket.

Belongs to the cytidylate kinase family. Type 2 subfamily.

It is found in the cytoplasm. It carries out the reaction CMP + ATP = CDP + ADP. It catalyses the reaction dCMP + ATP = dCDP + ADP. This is Cytidylate kinase from Haloarcula marismortui (strain ATCC 43049 / DSM 3752 / JCM 8966 / VKM B-1809) (Halobacterium marismortui).